We begin with the raw amino-acid sequence, 975 residues long: Protein bicaudal D homolog 1 (975 aa).

Coiled-coil stretches lie at residues 1–265 and 319–496; these read MAAE…HISI and SELN…IANE. Disordered regions lie at residues 383 to 403, 545 to 616, 800 to 824, 836 to 877, and 922 to 975; these read SSKE…GEEA, RSGS…LDTS, DHEQ…VSGE, LLHS…ASYL, and DCQQ…PPHP. 2 stretches are compositionally biased toward basic and acidic residues: residues 385-403 and 581-590; these read KELK…GEEA and VAKESTEASK. Polar residues predominate over residues 592–602; it reads PSPTKTPTISP. A coiled-coil region spans residues 663 to 803; it reads IDKDKEALME…LEDLEFDHEQ (141 aa). An interaction with RAB6A region spans residues 663 to 803; that stretch reads IDKDKEALME…LEDLEFDHEQ (141 aa). Residues 840–877 show a composition bias toward polar residues; sequence QGPQTPNIRVSSGTQRKRQFSPSLCDQSRPRTSGASYL.

This sequence belongs to the BicD family. In terms of assembly, interacts with RAB6A. Interacts (via C-terminus) with RAB6B (GTP-bound); the interaction is direct. Interacts with CLIP-115 and KIFC2. (Microbial infection) Interacts with human cytomegalovirus/HHV-5 protein UL32. Expressed in the brain, heart and skeletal muscle.

It is found in the golgi apparatus. In terms of biological role, regulates coat complex coatomer protein I (COPI)-independent Golgi-endoplasmic reticulum transport by recruiting the dynein-dynactin motor complex. This is Protein bicaudal D homolog 1 (BICD1) from Homo sapiens (Human).